The following is a 252-amino-acid chain: Phosphate import ATP-binding protein PstB 1 (252 aa).

The ABC transporter domain maps to 6–247 (ISSKDLHLYY…PKEKQTEDYI (242 aa)). 38-45 (GPSGCGKS) lines the ATP pocket.

Belongs to the ABC transporter superfamily. Phosphate importer (TC 3.A.1.7) family. The complex is composed of two ATP-binding proteins (PstB), two transmembrane proteins (PstC and PstA) and a solute-binding protein (PstS).

The protein localises to the cell membrane. It carries out the reaction phosphate(out) + ATP + H2O = ADP + 2 phosphate(in) + H(+). Its function is as follows. Part of the ABC transporter complex PstSACB involved in phosphate import. Responsible for energy coupling to the transport system. This Enterococcus faecalis (strain ATCC 700802 / V583) protein is Phosphate import ATP-binding protein PstB 1.